The primary structure comprises 357 residues: 3-isopropylmalate dehydrogenase (357 aa).

An NAD(+)-binding site is contributed by Gly-75–Glu-88. Arg-96, Arg-106, Arg-135, and Asp-224 together coordinate substrate. Residues Asp-224, Asp-248, and Asp-252 each contribute to the Mg(2+) site. Residue Gly-282–Asn-294 coordinates NAD(+).

Belongs to the isocitrate and isopropylmalate dehydrogenases family. LeuB type 1 subfamily. Homodimer. The cofactor is Mg(2+). Requires Mn(2+) as cofactor.

Its subcellular location is the cytoplasm. It carries out the reaction (2R,3S)-3-isopropylmalate + NAD(+) = 4-methyl-2-oxopentanoate + CO2 + NADH. It functions in the pathway amino-acid biosynthesis; L-leucine biosynthesis; L-leucine from 3-methyl-2-oxobutanoate: step 3/4. In terms of biological role, catalyzes the oxidation of 3-carboxy-2-hydroxy-4-methylpentanoate (3-isopropylmalate) to 3-carboxy-4-methyl-2-oxopentanoate. The product decarboxylates to 4-methyl-2 oxopentanoate. The sequence is that of 3-isopropylmalate dehydrogenase from Desulfotalea psychrophila (strain LSv54 / DSM 12343).